A 769-amino-acid polypeptide reads, in one-letter code: 4-hydroxybenzoyl-CoA reductase subunit alpha (769 aa).

Mo-molybdopterin cytosine dinucleotide contacts are provided by residues Gln214, Gly244–Phe245, Ser522–Thr526, Val650–Asn655, and Lys722–Ser725.

This sequence belongs to the xanthine dehydrogenase family. As to quaternary structure, heterohexamer of two alpha, two beta and two gamma subunits. The cofactor is Mo-molybdopterin cytosine dinucleotide. The N-terminus is blocked.

It catalyses the reaction oxidized 2[4Fe-4S]-[ferredoxin] + benzoyl-CoA + H2O = 4-hydroxybenzoyl-CoA + reduced 2[4Fe-4S]-[ferredoxin] + 2 H(+). Inactivated by low concentrations of cyanide in vitro. Its function is as follows. Component of a complex that catalyzes the reductive dehydroxylation of 4-hydroxybenzoyl-CoA to benzoyl-CoA. Reaction is not reversible. Is a key enzyme in the anaerobic degradation of phenolic compounds. The polypeptide is 4-hydroxybenzoyl-CoA reductase subunit alpha (hcrA) (Thauera aromatica).